The sequence spans 152 residues: uncharacterized protein (152 aa).

This is an uncharacterized protein from Methanocaldococcus jannaschii (strain ATCC 43067 / DSM 2661 / JAL-1 / JCM 10045 / NBRC 100440) (Methanococcus jannaschii).